Reading from the N-terminus, the 166-residue chain is Large ribosomal subunit protein uL10 (166 aa).

Belongs to the universal ribosomal protein uL10 family. In terms of assembly, part of the ribosomal stalk of the 50S ribosomal subunit. The N-terminus interacts with L11 and the large rRNA to form the base of the stalk. The C-terminus forms an elongated spine to which L12 dimers bind in a sequential fashion forming a multimeric L10(L12)X complex.

Forms part of the ribosomal stalk, playing a central role in the interaction of the ribosome with GTP-bound translation factors. This Ectopseudomonas mendocina (strain ymp) (Pseudomonas mendocina) protein is Large ribosomal subunit protein uL10.